A 273-amino-acid polypeptide reads, in one-letter code: Tyrosinase (273 aa).

Cu cation contacts are provided by histidine 37, histidine 53, histidine 62, histidine 189, histidine 193, and histidine 215.

It belongs to the tyrosinase family. It depends on Cu(2+) as a cofactor.

It catalyses the reaction 2 L-dopa + O2 = 2 L-dopaquinone + 2 H2O. It carries out the reaction L-tyrosine + O2 = L-dopaquinone + H2O. Its function is as follows. This is a copper-containing oxidase that functions in the formation of pigments such as melanins and other polyphenolic compounds. This chain is Tyrosinase (melC2), found in Streptomyces lincolnensis.